We begin with the raw amino-acid sequence, 195 residues long: CASP-like protein 1B2 (195 aa).

At 1 to 25 (MDLEKGKKPSEQAAACRIMQVKDKL) the chain is on the cytoplasmic side. A helical membrane pass occupies residues 26-46 (ITLQPVVRACVFLATAVAAVI). Residues 47–78 (MGLNKQSYTTVVAIVGTRPVTQTFTAKFKDTP) are Extracellular-facing. Residues 79–99 (AFVFFVIANAIASGYNLMVLV) traverse the membrane as a helical segment. The Cytoplasmic portion of the chain corresponds to 100–114 (TRRILQRRAQSLSVH). A helical membrane pass occupies residues 115-135 (LLDMVILTLLATGSATAASMA). The Extracellular portion of the chain corresponds to 136–160 (QLGKNGNLHARWNPICDKFGSFCNH). A helical membrane pass occupies residues 161 to 181 (GGIALVSSFIGVALMLALNLL). At 182-195 (SAAANSPRSNVTGQ) the chain is on the cytoplasmic side.

This sequence belongs to the Casparian strip membrane proteins (CASP) family. Homodimer and heterodimers.

It localises to the cell membrane. The polypeptide is CASP-like protein 1B2 (Oryza sativa subsp. indica (Rice)).